The following is a 553-amino-acid chain: Serine/threonine-protein kinase WNG2 (553 aa).

Disordered regions lie at residues 1–20 and 88–107; these read MMFPAVAAPPRRLPGERLQR and NREPPEDSAARPSSRSGGAE. The first 64 residues, 1–64, serve as a signal peptide directing secretion; sequence MMFPAVAAPP…GLSWVSVAVA (64 aa). Residues 125–395 enclose the Protein kinase domain; sequence FKQLRPVDEF…IGEVMEDPFF (271 aa). Residue Lys186 coordinates ATP. The Proton acceptor role is filled by Asp278. Positions 432 to 553 are disordered; that stretch reads REKADAAAKA…GFNKEDAQES (122 aa). The span at 438–451 shows a compositional bias: low complexity; sequence AAKAADNAEVPAAK. Composition is skewed to basic and acidic residues over residues 465 to 486, 494 to 524, and 531 to 553; these read GDRDRAGSGEKPAERAEEEKGR, EGNHDRTDDAGREELREGPGDQKPSGEENRE, and QREEQREGTGLEEGFNKEDAQES.

It belongs to the protein kinase superfamily. STE Ser/Thr protein kinase family. WNG subfamily. It depends on Mg(2+) as a cofactor.

The protein localises to the cytoplasmic granule. It localises to the secreted. It is found in the parasitophorous vacuole lumen. The catalysed reaction is L-seryl-[protein] + ATP = O-phospho-L-seryl-[protein] + ADP + H(+). It catalyses the reaction L-threonyl-[protein] + ATP = O-phospho-L-threonyl-[protein] + ADP + H(+). Probable serine/threonine-protein kinase. This is Serine/threonine-protein kinase WNG2 from Toxoplasma gondii.